The chain runs to 212 residues: Pyrrolidone-carboxylate peptidase (212 aa).

Active-site residues include glutamate 78, cysteine 141, and histidine 165.

This sequence belongs to the peptidase C15 family. In terms of assembly, homotetramer.

The protein localises to the cytoplasm. The enzyme catalyses Release of an N-terminal pyroglutamyl group from a polypeptide, the second amino acid generally not being Pro.. Its function is as follows. Removes 5-oxoproline from various penultimate amino acid residues except L-proline. This is Pyrrolidone-carboxylate peptidase (pcp) from Staphylococcus aureus.